The sequence spans 98 residues: NADH-ubiquinone oxidoreductase chain 4L (98 aa).

The next 3 helical transmembrane spans lie at 1-21, 29-49, and 61-81; these read MSMVYMNIMMAFTVSLVGLLM, SLLCLEGMMLSLFVMAALTIL, and IILLVFAACEAALGLSLLVMV.

It belongs to the complex I subunit 4L family. Core subunit of respiratory chain NADH dehydrogenase (Complex I) which is composed of 45 different subunits.

The protein resides in the mitochondrion inner membrane. It catalyses the reaction a ubiquinone + NADH + 5 H(+)(in) = a ubiquinol + NAD(+) + 4 H(+)(out). Its function is as follows. Core subunit of the mitochondrial membrane respiratory chain NADH dehydrogenase (Complex I) which catalyzes electron transfer from NADH through the respiratory chain, using ubiquinone as an electron acceptor. Part of the enzyme membrane arm which is embedded in the lipid bilayer and involved in proton translocation. This is NADH-ubiquinone oxidoreductase chain 4L (MT-ND4L) from Bos indicus (Zebu).